The sequence spans 555 residues: Bifunctional epoxide hydrolase 2 (555 aa).

The phosphatase stretch occupies residues 1 to 224 (MALRAAVFDL…KVTGVQLLQT (224 aa)). Aspartate 9 and aspartate 11 together coordinate Mg(2+). Lysine 43 is modified (N6-acetyllysine). Phosphate is bound at residue 123 to 124 (TN). A Mg(2+)-binding site is contributed by aspartate 185. 2 positions are modified to N6-acetyllysine: lysine 191 and lysine 215. The tract at residues 235–555 (SALSHGYVLI…ARNPLVDSKL (321 aa)) is epoxide hydrolase. In terms of domain architecture, AB hydrolase-1 spans 259 to 531 (PAVCLCHGFP…CGHWTQIDKP (273 aa)). Residue aspartate 335 is the Nucleophile of the active site. Serine 370 bears the Phosphoserine mark. Position 383 (tyrosine 383) interacts with substrate. Lysine 455 is subject to N6-succinyllysine. The active-site Proton donor is tyrosine 466. Lysine 505 carries the N6-succinyllysine modification. The S-(15-deoxy-Delta12,14-prostaglandin J2-9-yl)cysteine moiety is linked to residue cysteine 522. Histidine 524 acts as the Proton acceptor in catalysis. The Microbody targeting signal signature appears at 553–555 (SKL). Lysine 554 bears the N6-succinyllysine mark.

The protein belongs to the AB hydrolase superfamily. Epoxide hydrolase family. As to quaternary structure, homodimer. Mg(2+) serves as cofactor. The covalent modification of cysteine by 15-deoxy-Delta12,14-prostaglandin-J2 is autocatalytic and reversible. It may occur as an alternative to other cysteine modifications, such as S-nitrosylation and S-palmitoylation.

The protein localises to the cytoplasm. It localises to the peroxisome. The enzyme catalyses an epoxide + H2O = an ethanediol. The catalysed reaction is (9S,10S)-10-hydroxy-9-(phosphooxy)octadecanoate + H2O = (9S,10S)-9,10-dihydroxyoctadecanoate + phosphate. It carries out the reaction (14R,15S)-epoxy-(5Z,8Z,11Z)-eicosatrienoate + H2O = (14R,15R)-dihydroxy-(5Z,8Z,11Z)-eicosatrienoate. Inhibited by 1-(1-acetylpiperidin-4-yl)-3-(4-(trifl uoromethoxy)phenyl)urea (TPAU), 1-cyclohexyl-3-dodecylurea (CDU), 12-(3-adamantan-1-yl-ureido)-dodecanoic acid (AUDA), 1-((3S, 5S, 7S)-adamantan-1-yl)-3-(5-(2-(2-ethoxyethoxy) ethoxy)pentyl)urea (AEPU), N-adamantyl-N[']-cyclohexyl urea (ACU), 4-(((1S, 4S)-4-(3-((3S, 5S, 7S)-adamantan-1-yl) ureido)cyclohexyl)oxy)benzoic acid (c-AUCB), 4-(((1R, 4R)-4-(3-((3S, 5S, 7S)-adamantan-1-yl)ureido)cyclohexyl)oxy)benzoic acid (t-AUCB), 4-(((1R, 4R)-4-(3-(4(trifluoromethoxy)phenyl)ureido)cyclohexyl)oxy)benzoic acid (t-TAUCB) and to a lesser extent by 8-(3-((3S, 5S, 7S)-adamantan-1-yl)ureido) octanoic acid (AUOA). Bifunctional enzyme. The C-terminal domain has epoxide hydrolase activity and acts on epoxides (alkene oxides, oxiranes) and arene oxides. Plays a role in xenobiotic metabolism by degrading potentially toxic epoxides. Also determines steady-state levels of physiological mediators. The N-terminal domain has lipid phosphatase activity, with the highest activity towards threo-9,10-phosphonooxy-hydroxy-octadecanoic acid, followed by erythro-9,10-phosphonooxy-hydroxy-octadecanoic acid, 12-phosphonooxy-octadec-9Z-enoic acid and 12-phosphonooxy-octadec-9E-enoic acid. The chain is Bifunctional epoxide hydrolase 2 (EPHX2) from Sus scrofa (Pig).